The sequence spans 122 residues: Ribonuclease P protein component (122 aa).

Belongs to the RnpA family. Consists of a catalytic RNA component (M1 or rnpB) and a protein subunit.

It catalyses the reaction Endonucleolytic cleavage of RNA, removing 5'-extranucleotides from tRNA precursor.. Its function is as follows. RNaseP catalyzes the removal of the 5'-leader sequence from pre-tRNA to produce the mature 5'-terminus. It can also cleave other RNA substrates such as 4.5S RNA. The protein component plays an auxiliary but essential role in vivo by binding to the 5'-leader sequence and broadening the substrate specificity of the ribozyme. This chain is Ribonuclease P protein component, found in Shouchella clausii (strain KSM-K16) (Alkalihalobacillus clausii).